The primary structure comprises 356 residues: tRNA-specific 2-thiouridylase MnmA 1 (356 aa).

ATP is bound by residues 8–15 (GMSGGVDS) and methionine 34. Residue cysteine 103 is the Nucleophile of the active site. A disulfide bridge connects residues cysteine 103 and cysteine 199. Glycine 127 is an ATP binding site. The tract at residues 149–151 (KDQ) is interaction with tRNA. Cysteine 199 acts as the Cysteine persulfide intermediate in catalysis. Positions 305-306 (RY) are interaction with tRNA.

Belongs to the MnmA/TRMU family.

Its subcellular location is the cytoplasm. It carries out the reaction S-sulfanyl-L-cysteinyl-[protein] + uridine(34) in tRNA + AH2 + ATP = 2-thiouridine(34) in tRNA + L-cysteinyl-[protein] + A + AMP + diphosphate + H(+). In terms of biological role, catalyzes the 2-thiolation of uridine at the wobble position (U34) of tRNA, leading to the formation of s(2)U34. The protein is tRNA-specific 2-thiouridylase MnmA 1 of Clostridium botulinum (strain ATCC 19397 / Type A).